The chain runs to 561 residues: Arginine--tRNA ligase (561 aa).

Positions 129 to 139 (ANPTGPLHIGH) match the 'HIGH' region motif.

Belongs to the class-I aminoacyl-tRNA synthetase family. As to quaternary structure, monomer.

It is found in the cytoplasm. It carries out the reaction tRNA(Arg) + L-arginine + ATP = L-arginyl-tRNA(Arg) + AMP + diphosphate. The polypeptide is Arginine--tRNA ligase (Geotalea daltonii (strain DSM 22248 / JCM 15807 / FRC-32) (Geobacter daltonii)).